A 104-amino-acid chain; its full sequence is Class I hydrophobin 12 (104 aa).

Residues 1–25 (MFSKATLFFTAAVVIVAAGATPTTS) form the signal peptide. Disulfide bonds link cysteine 27–cysteine 85, cysteine 34–cysteine 79, cysteine 35–cysteine 67, and cysteine 86–cysteine 99.

This sequence belongs to the fungal hydrophobin family. As to quaternary structure, self-assembles to form functional amyloid fibrils called rodlets. Self-assembly into fibrillar rodlets occurs spontaneously at hydrophobic:hydrophilic interfaces and the rodlets further associate laterally to form amphipathic monolayers.

The protein resides in the secreted. Its subcellular location is the cell wall. In terms of biological role, aerial growth, conidiation, and dispersal of filamentous fungi in the environment rely upon a capability of their secreting small amphipathic proteins called hydrophobins (HPBs) with low sequence identity. Class I can self-assemble into an outermost layer of rodlet bundles on aerial cell surfaces, conferring cellular hydrophobicity that supports fungal growth, development and dispersal; whereas Class II form highly ordered films at water-air interfaces through intermolecular interactions but contribute nothing to the rodlet structure. Hydph12 is a class I hydrophobin involved in the formation of mycelium knots. This is Class I hydrophobin 12 from Pleurotus ostreatus (strain PC15) (Oyster mushroom).